Consider the following 494-residue polypeptide: Cobyric acid synthase (494 aa).

Residues 249–443 form the GATase cobBQ-type domain; it reads EINVTILRLP…LHGIFDNGAW (195 aa). C330 serves as the catalytic Nucleophile. H435 is an active-site residue.

It belongs to the CobB/CobQ family. CobQ subfamily.

The protein operates within cofactor biosynthesis; adenosylcobalamin biosynthesis. Its function is as follows. Catalyzes amidations at positions B, D, E, and G on adenosylcobyrinic A,C-diamide. NH(2) groups are provided by glutamine, and one molecule of ATP is hydrogenolyzed for each amidation. The polypeptide is Cobyric acid synthase (Crocosphaera subtropica (strain ATCC 51142 / BH68) (Cyanothece sp. (strain ATCC 51142))).